The primary structure comprises 389 residues: 26S proteasome non-ATPase regulatory subunit 6 (389 aa).

Residues 193–361 (DFKQAAELFL…EIVETNRPDS (169 aa)) enclose the PCI domain.

Belongs to the proteasome subunit S10 family. In terms of assembly, component of the 19S proteasome regulatory particle complex. The 26S proteasome consists of a 20S core particle (CP) and two 19S regulatory subunits (RP). The regulatory particle is made of a lid composed of 9 subunits including PSMD6, a base containing 6 ATPases and few additional components.

Component of the 26S proteasome, a multiprotein complex involved in the ATP-dependent degradation of ubiquitinated proteins. This complex plays a key role in the maintenance of protein homeostasis by removing misfolded or damaged proteins, which could impair cellular functions, and by removing proteins whose functions are no longer required. Therefore, the proteasome participates in numerous cellular processes, including cell cycle progression, apoptosis, or DNA damage repair. The sequence is that of 26S proteasome non-ATPase regulatory subunit 6 (PSMD6) from Homo sapiens (Human).